A 198-amino-acid chain; its full sequence is Nucleoside triphosphate pyrophosphatase (198 aa).

Asp-74 serves as the catalytic Proton acceptor.

It belongs to the Maf family. A divalent metal cation serves as cofactor.

Its subcellular location is the cytoplasm. It catalyses the reaction a ribonucleoside 5'-triphosphate + H2O = a ribonucleoside 5'-phosphate + diphosphate + H(+). It carries out the reaction a 2'-deoxyribonucleoside 5'-triphosphate + H2O = a 2'-deoxyribonucleoside 5'-phosphate + diphosphate + H(+). Its function is as follows. Nucleoside triphosphate pyrophosphatase. May have a dual role in cell division arrest and in preventing the incorporation of modified nucleotides into cellular nucleic acids. This Sphingopyxis alaskensis (strain DSM 13593 / LMG 18877 / RB2256) (Sphingomonas alaskensis) protein is Nucleoside triphosphate pyrophosphatase.